Consider the following 119-residue polypeptide: UPF0102 protein PM0647 (119 aa).

This sequence belongs to the UPF0102 family.

The protein is UPF0102 protein PM0647 of Pasteurella multocida (strain Pm70).